The following is a 308-amino-acid chain: tRNA pseudouridine synthase B (308 aa).

The Nucleophile role is filled by D47.

It belongs to the pseudouridine synthase TruB family. Type 1 subfamily.

The catalysed reaction is uridine(55) in tRNA = pseudouridine(55) in tRNA. Functionally, responsible for synthesis of pseudouridine from uracil-55 in the psi GC loop of transfer RNAs. This chain is tRNA pseudouridine synthase B, found in Xanthomonas campestris pv. campestris (strain 8004).